Reading from the N-terminus, the 64-residue chain is Conotoxin VnMLCL-033 (64 aa).

Positions 1 to 19 (MLCLPVFIILLLLASPAAP) are cleaved as a signal peptide. The propeptide occupies 20 to 43 (NPLQTRIQSNLIRAGPEDANIKTD). Position 63 is an isoleucine amide (isoleucine 63).

Belongs to the conotoxin T superfamily. As to expression, expressed by the venom duct.

Its subcellular location is the secreted. This is Conotoxin VnMLCL-033 from Conus ventricosus (Mediterranean cone).